The chain runs to 413 residues: Multidrug resistance protein MdtA (413 aa).

The signal sequence occupies residues 1-20 (MKGSNTFRWAIAIGVVVAAA). 2 disordered regions span residues 31-57 (SPTA…RDGP) and 391-413 (EPQT…GARA). Residues 32 to 49 (PTAAPGVAAQAQHTAAAG) are compositionally biased toward low complexity. Residues 397-413 (ADEKSPSRHEGQKGARA) show a composition bias toward basic and acidic residues.

The protein belongs to the membrane fusion protein (MFP) (TC 8.A.1) family. In terms of assembly, part of a tripartite efflux system composed of MdtA, MdtB and MdtC.

Its subcellular location is the cell inner membrane. The protein is Multidrug resistance protein MdtA of Salmonella typhi.